Here is a 98-residue protein sequence, read N- to C-terminus: Integration host factor subunit alpha (98 aa).

The disordered stretch occupies residues 49 to 71 (FGNFDLRDKNQRPGRNPKTGEDI).

The protein belongs to the bacterial histone-like protein family. In terms of assembly, heterodimer of an alpha and a beta chain.

Its function is as follows. This protein is one of the two subunits of integration host factor, a specific DNA-binding protein that functions in genetic recombination as well as in transcriptional and translational control. The protein is Integration host factor subunit alpha of Shewanella halifaxensis (strain HAW-EB4).